The primary structure comprises 341 residues: Phosphate acyltransferase (341 aa).

This sequence belongs to the PlsX family. In terms of assembly, homodimer. Probably interacts with PlsY.

The protein localises to the cytoplasm. The catalysed reaction is a fatty acyl-[ACP] + phosphate = an acyl phosphate + holo-[ACP]. Its pathway is lipid metabolism; phospholipid metabolism. Its function is as follows. Catalyzes the reversible formation of acyl-phosphate (acyl-PO(4)) from acyl-[acyl-carrier-protein] (acyl-ACP). This enzyme utilizes acyl-ACP as fatty acyl donor, but not acyl-CoA. The protein is Phosphate acyltransferase of Aliivibrio salmonicida (strain LFI1238) (Vibrio salmonicida (strain LFI1238)).